A 393-amino-acid polypeptide reads, in one-letter code: Prokineticin receptor 1 (393 aa).

The Extracellular portion of the chain corresponds to 1 to 62 (METTVGALGE…TNSRTFFAAK (62 aa)). N-linked (GlcNAc...) asparagine glycosylation occurs at Asn11. A helical membrane pass occupies residues 63-83 (IVIGMALVGIMLVCGIGNFIF). At 84–98 (ITALARYKKLRNLTN) the chain is on the cytoplasmic side. The chain crosses the membrane as a helical span at residues 99–119 (LLIANLAISDFLVAIVCCPFE). The Extracellular segment spans residues 120–146 (MDYYVVRQLSWEHGHVLCASVNYLRTV). A disulfide bridge links Cys137 with Cys217. Residues 147-167 (SLYVSTNALLAIAIDRYLAIV) form a helical membrane-spanning segment. The Cytoplasmic segment spans residues 168 to 179 (HPLRPRMKCQTA). Residues 180–200 (AGLIFLVWSVSILIAIPAAYF) traverse the membrane as a helical segment. Residues 201 to 232 (TTETVLVIVERQEKIFCGQIWPVDQQFYYRSY) are Extracellular-facing. The chain crosses the membrane as a helical span at residues 233 to 253 (FLLVFGLEFVGPVVAMTLCYA). Topologically, residues 254–282 (RVSRELWFKAVPGFQTEQIRRRLRCRRRT) are cytoplasmic. A helical membrane pass occupies residues 283 to 303 (VLGLVCVLSAYVLCWAPFYGF). Topologically, residues 304-322 (TIVRDFFPSVFVKEKHYLT) are extracellular. Residues 323-343 (AFYVVECIAMSNSMINTLCFV) traverse the membrane as a helical segment. The Cytoplasmic segment spans residues 344 to 393 (TVRNNTSKYLKRILRLQWRASPSGSKASADLDLRTTGIPATEEVDCIRLK).

It belongs to the G-protein coupled receptor 1 family. As to expression, expressed at high levels in the heart, skeletal muscle and pancreas. Expressed at lower levels in the brain, lung, liver and kidney.

Its subcellular location is the cell membrane. Receptor for prokineticin 1. Exclusively coupled to the G(q) subclass of heteromeric G proteins. Activation leads to mobilization of calcium, stimulation of phosphoinositide turnover and activation of p44/p42 mitogen-activated protein kinase. May play a role during early pregnancy. This Mus musculus (Mouse) protein is Prokineticin receptor 1 (Prokr1).